The primary structure comprises 212 residues: RNA chaperone ProQ (212 aa).

The tract at residues 114-149 (RIAKAGKTSAPAANAKKPVKKPVARRPKAAPSAKPV) is disordered. Residues 118-129 (AGKTSAPAANAK) show a composition bias toward low complexity. Basic residues predominate over residues 130–141 (KPVKKPVARRPK).

The protein belongs to the ProQ family.

Its subcellular location is the cytoplasm. RNA chaperone with significant RNA binding, RNA strand exchange and RNA duplexing activities. The protein is RNA chaperone ProQ of Shewanella piezotolerans (strain WP3 / JCM 13877).